We begin with the raw amino-acid sequence, 154 residues long: Myoglobin (154 aa).

A Globin domain is found at 2-148 (GLSDQEWQQV…FRNDMASKYK (147 aa)). His-65 serves as a coordination point for nitrite. His-65 is an O2 binding site. Residue His-94 coordinates heme b.

Belongs to the globin family. Monomeric.

The protein localises to the cytoplasm. It is found in the sarcoplasm. The enzyme catalyses Fe(III)-heme b-[protein] + nitric oxide + H2O = Fe(II)-heme b-[protein] + nitrite + 2 H(+). The catalysed reaction is H2O2 + AH2 = A + 2 H2O. In terms of biological role, monomeric heme protein which primary function is to store oxygen and facilitate its diffusion within muscle tissues. Reversibly binds oxygen through a pentacoordinated heme iron and enables its timely and efficient release as needed during periods of heightened demand. Depending on the oxidative conditions of tissues and cells, and in addition to its ability to bind oxygen, it also has a nitrite reductase activity whereby it regulates the production of bioactive nitric oxide. Under stress conditions, like hypoxia and anoxia, it also protects cells against reactive oxygen species thanks to its pseudoperoxidase activity. The sequence is that of Myoglobin (MB) from Cerorhinca monocerata (Rhinoceros auklet).